Reading from the N-terminus, the 356-residue chain is Uroporphyrinogen decarboxylase (356 aa).

Arg-33, Ala-35, Arg-37, Arg-46, Asp-82, Tyr-159, Ser-214, and His-334 together coordinate coproporphyrinogen I. Positions 33, 35, and 37 each coordinate coproporphyrinogen III. Residues Asp-82, Tyr-159, Ser-214, and His-334 each coordinate coproporphyrinogen III.

The protein belongs to the uroporphyrinogen decarboxylase family. Homodimer.

The protein localises to the cytoplasm. The protein resides in the cytosol. It catalyses the reaction uroporphyrinogen III + 4 H(+) = coproporphyrinogen III + 4 CO2. The protein operates within porphyrin-containing compound metabolism; protoporphyrin-IX biosynthesis; coproporphyrinogen-III from 5-aminolevulinate: step 4/4. Its function is as follows. Catalyzes the decarboxylation of four acetate groups of uroporphyrinogen-III to yield coproporphyrinogen-III. In Drosophila melanogaster (Fruit fly), this protein is Uroporphyrinogen decarboxylase.